Here is a 253-residue protein sequence, read N- to C-terminus: 3-deoxy-manno-octulosonate cytidylyltransferase (253 aa).

Belongs to the KdsB family.

The protein resides in the cytoplasm. It carries out the reaction 3-deoxy-alpha-D-manno-oct-2-ulosonate + CTP = CMP-3-deoxy-beta-D-manno-octulosonate + diphosphate. It functions in the pathway nucleotide-sugar biosynthesis; CMP-3-deoxy-D-manno-octulosonate biosynthesis; CMP-3-deoxy-D-manno-octulosonate from 3-deoxy-D-manno-octulosonate and CTP: step 1/1. It participates in bacterial outer membrane biogenesis; lipopolysaccharide biosynthesis. Its function is as follows. Activates KDO (a required 8-carbon sugar) for incorporation into bacterial lipopolysaccharide in Gram-negative bacteria. This chain is 3-deoxy-manno-octulosonate cytidylyltransferase, found in Haemophilus ducreyi (strain 35000HP / ATCC 700724).